We begin with the raw amino-acid sequence, 385 residues long: Protein-glutamate methylesterase/protein-glutamine glutaminase (385 aa).

Aspartate 53 carries the post-translational modification 4-aspartylphosphate. The CheB-type methylesterase domain occupies lysine 196–serine 385. Active-site residues include serine 208, histidine 234, and aspartate 330.

Belongs to the CheB family. Post-translationally, phosphorylated by CheA. Phosphorylation of the N-terminal regulatory domain activates the methylesterase activity.

It is found in the cytoplasm. The enzyme catalyses [protein]-L-glutamate 5-O-methyl ester + H2O = L-glutamyl-[protein] + methanol + H(+). The catalysed reaction is L-glutaminyl-[protein] + H2O = L-glutamyl-[protein] + NH4(+). Functionally, involved in chemotaxis. Part of a chemotaxis signal transduction system that modulates chemotaxis in response to various stimuli. Catalyzes the demethylation of specific methylglutamate residues introduced into the chemoreceptors (methyl-accepting chemotaxis proteins or MCP) by CheR. Also mediates the irreversible deamidation of specific glutamine residues to glutamic acid. The protein is Protein-glutamate methylesterase/protein-glutamine glutaminase of Borreliella burgdorferi (strain ATCC 35210 / DSM 4680 / CIP 102532 / B31) (Borrelia burgdorferi).